Here is a 408-residue protein sequence, read N- to C-terminus: S-adenosylmethionine:tRNA ribosyltransferase-isomerase (408 aa).

Belongs to the QueA family. In terms of assembly, monomer.

The protein localises to the cytoplasm. It catalyses the reaction 7-aminomethyl-7-carbaguanosine(34) in tRNA + S-adenosyl-L-methionine = epoxyqueuosine(34) in tRNA + adenine + L-methionine + 2 H(+). It functions in the pathway tRNA modification; tRNA-queuosine biosynthesis. In terms of biological role, transfers and isomerizes the ribose moiety from AdoMet to the 7-aminomethyl group of 7-deazaguanine (preQ1-tRNA) to give epoxyqueuosine (oQ-tRNA). The protein is S-adenosylmethionine:tRNA ribosyltransferase-isomerase of Trichormus variabilis (strain ATCC 29413 / PCC 7937) (Anabaena variabilis).